The primary structure comprises 124 residues: Large ribosomal subunit protein bL12 (124 aa).

The protein belongs to the bacterial ribosomal protein bL12 family. Homodimer. Part of the ribosomal stalk of the 50S ribosomal subunit. Forms a multimeric L10(L12)X complex, where L10 forms an elongated spine to which 2 to 4 L12 dimers bind in a sequential fashion. Binds GTP-bound translation factors.

Its function is as follows. Forms part of the ribosomal stalk which helps the ribosome interact with GTP-bound translation factors. Is thus essential for accurate translation. In Idiomarina loihiensis (strain ATCC BAA-735 / DSM 15497 / L2-TR), this protein is Large ribosomal subunit protein bL12.